A 706-amino-acid chain; its full sequence is uncharacterized protein (706 aa).

3 coiled-coil regions span residues 86 to 162 (TKNV…AKKI), 269 to 299 (DYLKDVEKSIEQLSDNYEQYLSNIDIFVNEL), and 337 to 427 (DDYI…QSDY).

This is an uncharacterized protein from Staphylococcus aureus (strain MRSA252).